Here is a 337-residue protein sequence, read N- to C-terminus: MDSNPGADQAVAPIVEQALRTAMSAGWEVRGTTSPNPPVGAVIISTSGEIVGTGATQPVGGVHAEVQALADAAGKTEGATAVVTLEPCRHTGRTGPCTQALIEAGIKDVLFLHSDPNPSAGGGEQVLVDAGINVVQLPSPEGVPDALIPWLKSVQLRRPHVTLKFAQTIDGFTAAADGTSQWITGEMARDYVHADREHRDAIIIGTGTALIDNPSLTARYPDGTQREHQPRRVVIGRRNIADAGDAASNLNRLGFEQYATIDEALAELYATGARDVLVEGGAGLASGFANQGLVDWLQVYQAPLLLGEGISVLAHPLTNTLKGASALCPRAASGAGR.

The segment at 1-157 (MDSNPGADQA…IPWLKSVQLR (157 aa)) is deaminase. Positions 13-124 (PIVEQALRTA…DPNPSAGGGE (112 aa)) constitute a CMP/dCMP-type deaminase domain. His-63 is a Zn(2+) binding site. Residue Glu-65 is the Proton donor of the active site. Zn(2+)-binding residues include Cys-88 and Cys-97. The segment at 158 to 337 (RPHVTLKFAQ…CPRAASGAGR (180 aa)) is reductase. Residues Ala-166 and 173-176 (TAAA) each bind NADP(+). Residue Ser-180 coordinates substrate. NADP(+) is bound at residue Trp-182. Residue Arg-196 coordinates substrate. NADP(+)-binding residues include Thr-208 and Asp-212. Substrate contacts are provided by Leu-216, Arg-219, and Glu-279. 281 to 287 (GAGLASG) lines the NADP(+) pocket.

This sequence in the N-terminal section; belongs to the cytidine and deoxycytidylate deaminase family. The protein in the C-terminal section; belongs to the HTP reductase family. Zn(2+) serves as cofactor.

It catalyses the reaction 2,5-diamino-6-hydroxy-4-(5-phosphoribosylamino)-pyrimidine + H2O + H(+) = 5-amino-6-(5-phospho-D-ribosylamino)uracil + NH4(+). The catalysed reaction is 5-amino-6-(5-phospho-D-ribitylamino)uracil + NADP(+) = 5-amino-6-(5-phospho-D-ribosylamino)uracil + NADPH + H(+). The protein operates within cofactor biosynthesis; riboflavin biosynthesis; 5-amino-6-(D-ribitylamino)uracil from GTP: step 2/4. It functions in the pathway cofactor biosynthesis; riboflavin biosynthesis; 5-amino-6-(D-ribitylamino)uracil from GTP: step 3/4. In terms of biological role, converts 2,5-diamino-6-(ribosylamino)-4(3h)-pyrimidinone 5'-phosphate into 5-amino-6-(ribosylamino)-2,4(1h,3h)-pyrimidinedione 5'-phosphate. This is Riboflavin biosynthesis protein RibD (ribD) from Corynebacterium ammoniagenes (Brevibacterium ammoniagenes).